We begin with the raw amino-acid sequence, 521 residues long: Acetylcholine receptor subunit beta-like 1 (521 aa).

Residues methionine 1–alanine 24 form the signal peptide. Topologically, residues serine 25–lysine 235 are extracellular. The N-linked (GlcNAc...) asparagine glycan is linked to asparagine 48. An intrachain disulfide couples cysteine 152 to cysteine 166. 3 helical membrane-spanning segments follow: residues threonine 236–leucine 260, valine 268–serine 286, and tyrosine 302–tryptophan 323. Topologically, residues asparagine 324–arginine 481 are cytoplasmic. A helical transmembrane segment spans residues leucine 482–methionine 500.

Belongs to the ligand-gated ion channel (TC 1.A.9) family. Acetylcholine receptor (TC 1.A.9.1) subfamily. As to expression, CNS in embryos.

It localises to the postsynaptic cell membrane. It is found in the cell membrane. Its function is as follows. After binding acetylcholine, the AChR responds by an extensive change in conformation that affects all subunits and leads to opening of an ion-conducting channel across the plasma membrane. The protein is Acetylcholine receptor subunit beta-like 1 (nAChRbeta1) of Drosophila melanogaster (Fruit fly).